A 299-amino-acid polypeptide reads, in one-letter code: F-actin-capping protein subunit alpha-3 (299 aa).

Phosphoserine is present on residues S2 and S290.

The protein belongs to the F-actin-capping protein alpha subunit family. Component of the F-actin capping complex, composed of a heterodimer of an alpha and a beta subunit. Component of the WASH complex, composed of F-actin-capping protein subunit alpha (CAPZA1, CAPZA2 or CAPZA3), F-actin-capping protein subunit beta (CAPZB), WASHC1, WASHC2, WASHC3, WASHC4 and WASHC5. In terms of tissue distribution, exclusively expressed in the testis.

Its subcellular location is the cytoplasm. It localises to the cytoskeleton. Its function is as follows. F-actin-capping proteins bind in a Ca(2+)-independent manner to the fast growing ends of actin filaments (barbed end) thereby blocking the exchange of subunits at these ends. Unlike other capping proteins (such as gelsolin and severin), these proteins do not sever actin filaments. May play a role in the morphogenesis of spermatid. This chain is F-actin-capping protein subunit alpha-3 (Capza3), found in Rattus norvegicus (Rat).